We begin with the raw amino-acid sequence, 205 residues long: Adenylyl-sulfate kinase (205 aa).

An ATP-binding site is contributed by 31–38 (GLSGSGKS). Serine 105 functions as the Phosphoserine intermediate in the catalytic mechanism.

The protein belongs to the APS kinase family.

The enzyme catalyses adenosine 5'-phosphosulfate + ATP = 3'-phosphoadenylyl sulfate + ADP + H(+). The protein operates within sulfur metabolism; hydrogen sulfide biosynthesis; sulfite from sulfate: step 2/3. In terms of biological role, catalyzes the synthesis of activated sulfate. This Shewanella pealeana (strain ATCC 700345 / ANG-SQ1) protein is Adenylyl-sulfate kinase.